Consider the following 485-residue polypeptide: NGFI-A-binding protein 1 (485 aa).

Residues 4–82 (ALPRTLGELQ…RDWVTNPGLF (79 aa)) form an NCD1 region. Residues lysine 126, lysine 129, and lysine 143 each participate in a glycyl lysine isopeptide (Lys-Gly) (interchain with G-Cter in SUMO2) cross-link. The segment at 160–187 (WQGHHATESEHSLSPADVGSPASPKESS) is disordered. A phosphoserine mark is found at serine 171 and serine 182. Residue lysine 211 forms a Glycyl lysine isopeptide (Lys-Gly) (interchain with G-Cter in SUMO2) linkage. Positions 220–309 (LLKNNKKLAK…ARQVSREVTY (90 aa)) are NCD2. The segment at 306–337 (EVTYKYTYRTTRLKCGERDELSPKRIKVEDGF) is necessary for nuclear localization. Serine 327 bears the Phosphoserine mark. Residue lysine 332 forms a Glycyl lysine isopeptide (Lys-Gly) (interchain with G-Cter in SUMO1); alternate linkage. Lysine 332 is covalently cross-linked (Glycyl lysine isopeptide (Lys-Gly) (interchain with G-Cter in SUMO2); alternate). Residues lysine 354, lysine 368, and lysine 372 each participate in a glycyl lysine isopeptide (Lys-Gly) (interchain with G-Cter in SUMO2) cross-link. A disordered region spans residues 398–432 (RQSSGEHSPDGLPSDGSDGQGERPLNLRMPNVQNR). Serine 405 is modified (phosphoserine). Residues lysine 452, lysine 463, and lysine 475 each participate in a glycyl lysine isopeptide (Lys-Gly) (interchain with G-Cter in SUMO2) cross-link. Lysine 478 is covalently cross-linked (Glycyl lysine isopeptide (Lys-Gly) (interchain with G-Cter in SUMO1); alternate). Lysine 478 participates in a covalent cross-link: Glycyl lysine isopeptide (Lys-Gly) (interchain with G-Cter in SUMO2); alternate.

It belongs to the NAB family. In terms of assembly, homomultimers may associate with EGR1 bound to DNA.

The protein resides in the nucleus. Its function is as follows. Acts as a transcriptional repressor for zinc finger transcription factors EGR1 and EGR2. This Mesocricetus auratus (Golden hamster) protein is NGFI-A-binding protein 1 (NAB1).